The chain runs to 546 residues: Probable malate:quinone oxidoreductase (546 aa).

This sequence belongs to the MQO family. FAD is required as a cofactor.

It carries out the reaction (S)-malate + a quinone = a quinol + oxaloacetate. It participates in carbohydrate metabolism; tricarboxylic acid cycle; oxaloacetate from (S)-malate (quinone route): step 1/1. This Acinetobacter baumannii (strain AB0057) protein is Probable malate:quinone oxidoreductase.